The sequence spans 342 residues: GTPase Obg (342 aa).

The Obg domain maps to 1-159 (MKFLDEAKVY…MWIWLRLKLI (159 aa)). Positions 160-327 (ADAGLVGLPN…ALRALQTEID (168 aa)) constitute an OBG-type G domain. GTP is bound by residues 166 to 173 (GLPNAGKS), 191 to 195 (FTTLH), 212 to 215 (DIPG), 279 to 282 (SKAD), and 308 to 310 (SSA). Mg(2+) is bound by residues Ser173 and Thr193.

This sequence belongs to the TRAFAC class OBG-HflX-like GTPase superfamily. OBG GTPase family. In terms of assembly, monomer. The cofactor is Mg(2+).

It localises to the cytoplasm. Functionally, an essential GTPase which binds GTP, GDP and possibly (p)ppGpp with moderate affinity, with high nucleotide exchange rates and a fairly low GTP hydrolysis rate. Plays a role in control of the cell cycle, stress response, ribosome biogenesis and in those bacteria that undergo differentiation, in morphogenesis control. The polypeptide is GTPase Obg (Methylobacterium radiotolerans (strain ATCC 27329 / DSM 1819 / JCM 2831 / NBRC 15690 / NCIMB 10815 / 0-1)).